Here is a 159-residue protein sequence, read N- to C-terminus: Neuroglobin (159 aa).

The 149-residue stretch at 3-151 folds into the Globin domain; sequence KLSEKDKELI…VVAAMSQGWA (149 aa). Residues H66 and H98 each coordinate heme b.

This sequence belongs to the globin family. Monomer. Homodimers and homotetramers. Mainly monomeric but also detected as part of homodimers and homotetramers.

It is found in the cytoplasm. The protein localises to the cytosol. It localises to the mitochondrion matrix. The enzyme catalyses Fe(III)-heme b-[protein] + nitric oxide + H2O = Fe(II)-heme b-[protein] + nitrite + 2 H(+). Functionally, monomeric globin with a bis-histidyl six-coordinate heme-iron atom through which it can bind dioxygen, carbon monoxide and nitric oxide. Could help transport oxygen and increase its availability to the metabolically active neuronal tissues, though its low quantity in tissues as well as its high affinity for dioxygen, which may limit its oxygen-releasing ability, argue against it. The ferrous/deoxygenated form exhibits a nitrite reductase activity and it could produce nitric oxide which in turn inhibits cellular respiration in response to hypoxia. In its ferrous/deoxygenated state, it may also exhibit GDI (Guanine nucleotide Dissociation Inhibitor) activity toward heterotrimeric G-alpha proteins, thereby regulating signal transduction to facilitate neuroprotective responses in the wake of hypoxia and associated oxidative stress. The sequence is that of Neuroglobin (ngb) from Chaenocephalus aceratus (Blackfin icefish).